Here is a 251-residue protein sequence, read N- to C-terminus: Imidazole glycerol phosphate synthase subunit HisF (251 aa).

Residues Asp-10 and Asp-129 contribute to the active site.

This sequence belongs to the HisA/HisF family. In terms of assembly, heterodimer of HisH and HisF.

The protein localises to the cytoplasm. The enzyme catalyses 5-[(5-phospho-1-deoxy-D-ribulos-1-ylimino)methylamino]-1-(5-phospho-beta-D-ribosyl)imidazole-4-carboxamide + L-glutamine = D-erythro-1-(imidazol-4-yl)glycerol 3-phosphate + 5-amino-1-(5-phospho-beta-D-ribosyl)imidazole-4-carboxamide + L-glutamate + H(+). It functions in the pathway amino-acid biosynthesis; L-histidine biosynthesis; L-histidine from 5-phospho-alpha-D-ribose 1-diphosphate: step 5/9. In terms of biological role, IGPS catalyzes the conversion of PRFAR and glutamine to IGP, AICAR and glutamate. The HisF subunit catalyzes the cyclization activity that produces IGP and AICAR from PRFAR using the ammonia provided by the HisH subunit. This chain is Imidazole glycerol phosphate synthase subunit HisF, found in Cutibacterium acnes (strain DSM 16379 / KPA171202) (Propionibacterium acnes).